Consider the following 318-residue polypeptide: tRNA U34 carboxymethyltransferase (318 aa).

Residues Lys-88, Trp-102, Lys-107, Gly-126, Met-192, Tyr-196, and Arg-311 each coordinate carboxy-S-adenosyl-L-methionine.

This sequence belongs to the class I-like SAM-binding methyltransferase superfamily. CmoB family. In terms of assembly, homotetramer.

The catalysed reaction is carboxy-S-adenosyl-L-methionine + 5-hydroxyuridine(34) in tRNA = 5-carboxymethoxyuridine(34) in tRNA + S-adenosyl-L-homocysteine + H(+). In terms of biological role, catalyzes carboxymethyl transfer from carboxy-S-adenosyl-L-methionine (Cx-SAM) to 5-hydroxyuridine (ho5U) to form 5-carboxymethoxyuridine (cmo5U) at position 34 in tRNAs. In Pseudomonas fluorescens (strain SBW25), this protein is tRNA U34 carboxymethyltransferase.